A 208-amino-acid chain; its full sequence is Ribosomal RNA small subunit methyltransferase G (208 aa).

S-adenosyl-L-methionine-binding positions include glycine 76, leucine 81, 127–128 (VE), and arginine 142.

This sequence belongs to the methyltransferase superfamily. RNA methyltransferase RsmG family.

Its subcellular location is the cytoplasm. It catalyses the reaction guanosine(527) in 16S rRNA + S-adenosyl-L-methionine = N(7)-methylguanosine(527) in 16S rRNA + S-adenosyl-L-homocysteine. Functionally, specifically methylates the N7 position of guanine in position 527 of 16S rRNA. This chain is Ribosomal RNA small subunit methyltransferase G, found in Legionella pneumophila subsp. pneumophila (strain Philadelphia 1 / ATCC 33152 / DSM 7513).